Reading from the N-terminus, the 359-residue chain is MNGKPAFDKPKVELHVHLDGAIRLKTVLDVAKRRGISLPVSMEEELKELCTVNEPATLTEFLGKFSHFMHVIAGDREAIKRIAYEFVETKAKEGVIYVEARYSPHFLANKGVEPLPWDQKPGDITPDDVVDLVNQGFKEGEQAFKTKARSILCCMRHMPNWSMEVVELCKKFHKDGVVAIDLAGDESMNCESYPGHKKAFEEAVRSNVHRTVHAGEVGPASVVREAVEVLKAERIGHGYHTLEDQNLYKQLLHQNMHFEMCPVSSRLTGACEPDFTKHPLITFKKDKANYSLNTDDPTIFNSTLNSDYEVVQKYMDFTEEEFKRLNINAAKSCFLPEKEKEKLLNQLYEAYGMRKSTSF.

The Zn(2+) site is built by His-15 and His-17. The substrate site is built by His-17, Asp-19, and Gly-184. Residue His-213 coordinates Zn(2+). Glu-216 serves as the catalytic Proton donor. Zn(2+) is bound at residue Asp-295. Substrate is bound at residue Asp-296.

The protein belongs to the metallo-dependent hydrolases superfamily. Adenosine and AMP deaminases family. The cofactor is Zn(2+).

It is found in the cell membrane. It localises to the cell junction. The protein localises to the cytoplasmic vesicle lumen. The protein resides in the cytoplasm. Its subcellular location is the lysosome. The catalysed reaction is adenosine + H2O + H(+) = inosine + NH4(+). It carries out the reaction 2'-deoxyadenosine + H2O + H(+) = 2'-deoxyinosine + NH4(+). In terms of biological role, catalyzes the hydrolytic deamination of adenosine and 2-deoxyadenosine. Plays an important role in purine metabolism and in adenosine homeostasis. Modulates signaling by extracellular adenosine, and so contributes indirectly to cellular signaling events. May act as a positive regulator of T-cell coactivation. The polypeptide is Adenosine deaminase (ada) (Danio rerio (Zebrafish)).